The following is a 222-amino-acid chain: uncharacterized protein (222 aa).

Residues 142–222 (ARRGGCVHPP…LPDPPSAGHL (81 aa)) form a disordered region. Residues 160–169 (QSRSISSRRA) are compositionally biased toward low complexity. Residues 182–196 (PRRRPHRHRTRPQTR) show a composition bias toward basic residues.

This sequence belongs to the Rv1128c/1148c/1588c/1702c/1945/3466 family.

This is an uncharacterized protein from Mycobacterium tuberculosis (strain ATCC 25618 / H37Rv).